Consider the following 238-residue polypeptide: End-binding protein 1 (238 aa).

The Calponin-homology (CH) domain occupies 15-117 (FVGRVSLLKW…FFQWFKWFFD (103 aa)). The tract at residues 101-238 (KYMDNFEFFQ…EDILYAEYHQ (138 aa)) is interaction with aurora kinase. Polar residues predominate over residues 124 to 165 (KSGATESGSANAVTKTSKPGNRSGSTAASMQNPKASSTSGPS). A disordered region spans residues 124–169 (KSGATESGSANAVTKTSKPGNRSGSTAASMQNPKASSTSGPSIDSK). Serine 148 bears the Phosphoserine mark. The region spanning 156-238 (PKASSTSGPS…EDILYAEYHQ (83 aa)) is the EB1 C-terminal domain.

The protein belongs to the MAPRE family. As to quaternary structure, homodimer; disulfide-linked and via interaction of the C-terminal EB1-specific domains. Interacts with BOP1 (via C-terminal WD repeats). Interacts with giardin subunit gamma, neurogenic locus notch homolog protein, GL50803_8358 and GL50803_11327. Interacts (via C-terminal residues 101-238) with aurora kinase. Interacts with tubulin gamma chain. Post-translationally, phosphorylated in vitro by aurora kinase. Phosphorylation is important for cell division.

It localises to the nucleus membrane. It is found in the cytoplasm. Its subcellular location is the cytoskeleton. The protein localises to the spindle. The protein resides in the nucleus envelope. It localises to the flagellum axoneme. It is found in the cell projection. Its subcellular location is the cilium. The protein localises to the flagellum. In terms of biological role, involved in cell division. Involved in mitosis. Regulates dynamics of microtubules (MTs) during mitosis. Required for cytokinesis. Binds polymerized MTs in vitro. Is able to rescue a mitotic division defect, the proper positioning of the nucleus, of the S.cerevisiae BIM1 knockout mutant in a complementation assay. May play a role in spindle positioning and MT distribution. May be involved in MT nucleation for the formation of median bodies and in the biogenesis of flagella. Based on its localization to both the flagellar exit point and the distal flagellar tips, it may mediate the transition from anterograde to retrograde intraflagellar transport (IFT). The sequence is that of End-binding protein 1 from Giardia intestinalis (strain ATCC 50803 / WB clone C6) (Giardia lamblia).